Here is an 831-residue protein sequence, read N- to C-terminus: Leucine--tRNA ligase (831 aa).

Positions 36–46 match the 'HIGH' region motif; that stretch reads PYPSGKLHIGH. Residues 607–611 carry the 'KMSKS' region motif; it reads KMSKS. Residue lysine 610 coordinates ATP.

The protein belongs to the class-I aminoacyl-tRNA synthetase family.

The protein localises to the cytoplasm. It catalyses the reaction tRNA(Leu) + L-leucine + ATP = L-leucyl-tRNA(Leu) + AMP + diphosphate. The sequence is that of Leucine--tRNA ligase from Neorickettsia sennetsu (strain ATCC VR-367 / Miyayama) (Ehrlichia sennetsu).